We begin with the raw amino-acid sequence, 119 residues long: Large ribosomal subunit protein bL20 (119 aa).

It belongs to the bacterial ribosomal protein bL20 family.

In terms of biological role, binds directly to 23S ribosomal RNA and is necessary for the in vitro assembly process of the 50S ribosomal subunit. It is not involved in the protein synthesizing functions of that subunit. The protein is Large ribosomal subunit protein bL20 of Chloroflexus aurantiacus (strain ATCC 29366 / DSM 635 / J-10-fl).